A 219-amino-acid polypeptide reads, in one-letter code: Elongation factor Ts (219 aa).

The segment at 83 to 86 (TDFV) is involved in Mg(2+) ion dislocation from EF-Tu.

Belongs to the EF-Ts family.

The protein resides in the cytoplasm. Functionally, associates with the EF-Tu.GDP complex and induces the exchange of GDP to GTP. It remains bound to the aminoacyl-tRNA.EF-Tu.GTP complex up to the GTP hydrolysis stage on the ribosome. The polypeptide is Elongation factor Ts (Synechococcus sp. (strain WH7803)).